The following is a 216-amino-acid chain: DNA-directed RNA polymerase subunit alpha (216 aa).

Belongs to the RNA polymerase alpha chain family. In terms of assembly, in plastids the minimal PEP RNA polymerase catalytic core is composed of four subunits: alpha, beta, beta', and beta''. When a (nuclear-encoded) sigma factor is associated with the core the holoenzyme is formed, which can initiate transcription.

It localises to the plastid. The protein localises to the chloroplast. It catalyses the reaction RNA(n) + a ribonucleoside 5'-triphosphate = RNA(n+1) + diphosphate. Functionally, DNA-dependent RNA polymerase catalyzes the transcription of DNA into RNA using the four ribonucleoside triphosphates as substrates. The polypeptide is DNA-directed RNA polymerase subunit alpha (rpoA) (Euglena gracilis).